A 176-amino-acid chain; its full sequence is MNGDEDWLTVGKLVAAQGMQGELRINPSSDFPERFTLPGQRWLKERNGEPRPIELLTGRQLPGRSLYVVKFAGVNNRNAAEALVGQNLLVPSSDRPSLAEGEFHLLDLVGLEARLQAEGPAIGHVIDLTTAGNDLLEIELLAGRRVLVPFVEAIVPEVQLNQGWLRLTPPPGLLEL.

The PRC barrel domain occupies 100 to 173; sequence EGEFHLLDLV…WLRLTPPPGL (74 aa).

It belongs to the RimM family. Binds ribosomal protein uS19.

Its subcellular location is the cytoplasm. Functionally, an accessory protein needed during the final step in the assembly of 30S ribosomal subunit, possibly for assembly of the head region. Essential for efficient processing of 16S rRNA. May be needed both before and after RbfA during the maturation of 16S rRNA. It has affinity for free ribosomal 30S subunits but not for 70S ribosomes. The protein is Ribosome maturation factor RimM of Prochlorococcus marinus (strain MIT 9303).